The following is a 457-amino-acid chain: DNA repair protein RadA (457 aa).

The segment at 12 to 29 (CQACGYESAKWMGKCPNC) adopts a C4-type zinc-finger fold. 97 to 104 (GDPGIGKS) serves as a coordination point for ATP. Positions 254 to 258 (KNRFG) match the RadA KNRFG motif motif. The interval 353–457 (DAYLKAAGGV…GEALKKALPD (105 aa)) is lon-protease-like.

Belongs to the RecA family. RadA subfamily.

DNA-dependent ATPase involved in processing of recombination intermediates, plays a role in repairing DNA breaks. Stimulates the branch migration of RecA-mediated strand transfer reactions, allowing the 3' invading strand to extend heteroduplex DNA faster. Binds ssDNA in the presence of ADP but not other nucleotides, has ATPase activity that is stimulated by ssDNA and various branched DNA structures, but inhibited by SSB. Does not have RecA's homology-searching function. This Listeria monocytogenes serovar 1/2a (strain ATCC BAA-679 / EGD-e) protein is DNA repair protein RadA.